Consider the following 470-residue polypeptide: Homogentisate 1,2-dioxygenase (470 aa).

Positions 356, 362, and 392 each coordinate Fe cation.

It belongs to the homogentisate dioxygenase family. Requires Fe cation as cofactor.

The enzyme catalyses homogentisate + O2 = 4-maleylacetoacetate + H(+). Its pathway is amino-acid degradation; L-phenylalanine degradation; acetoacetate and fumarate from L-phenylalanine: step 4/6. The sequence is that of Homogentisate 1,2-dioxygenase (HGO) from Oryza sativa subsp. japonica (Rice).